Here is a 122-residue protein sequence, read N- to C-terminus: Double-headed protease inhibitor, submandibular gland (122 aa).

Kazal-like domains follow at residues 10–70 (GGRK…KCDI) and 71–121 (ECPQ…QCQS). 6 disulfide bridges follow: C16–C50, C28–C47, C36–C68, C72–C101, C79–C98, and C87–C119.

Its subcellular location is the secreted. In terms of biological role, this inhibitor is composed of two homologous actively inhibiting halves: one which inhibits trypsin, the other which inhibits elastase. The chain is Double-headed protease inhibitor, submandibular gland from Mustela lutreola (European mink).